The primary structure comprises 251 residues: 3-deoxy-manno-octulosonate cytidylyltransferase (251 aa).

Belongs to the KdsB family.

The protein localises to the cytoplasm. It carries out the reaction 3-deoxy-alpha-D-manno-oct-2-ulosonate + CTP = CMP-3-deoxy-beta-D-manno-octulosonate + diphosphate. It functions in the pathway nucleotide-sugar biosynthesis; CMP-3-deoxy-D-manno-octulosonate biosynthesis; CMP-3-deoxy-D-manno-octulosonate from 3-deoxy-D-manno-octulosonate and CTP: step 1/1. It participates in bacterial outer membrane biogenesis; lipopolysaccharide biosynthesis. Functionally, activates KDO (a required 8-carbon sugar) for incorporation into bacterial lipopolysaccharide in Gram-negative bacteria. This chain is 3-deoxy-manno-octulosonate cytidylyltransferase, found in Brucella abortus (strain 2308).